Consider the following 475-residue polypeptide: UDP-N-acetylmuramate--L-alanine ligase (475 aa).

114-120 (GTHGKTT) contacts ATP.

Belongs to the MurCDEF family.

It is found in the cytoplasm. It carries out the reaction UDP-N-acetyl-alpha-D-muramate + L-alanine + ATP = UDP-N-acetyl-alpha-D-muramoyl-L-alanine + ADP + phosphate + H(+). Its pathway is cell wall biogenesis; peptidoglycan biosynthesis. In terms of biological role, cell wall formation. This chain is UDP-N-acetylmuramate--L-alanine ligase, found in Bartonella henselae (strain ATCC 49882 / DSM 28221 / CCUG 30454 / Houston 1) (Rochalimaea henselae).